A 383-amino-acid chain; its full sequence is Acetylornithine deacetylase (383 aa).

His-80 is a Zn(2+) binding site. Asp-82 is a catalytic residue. Residue Asp-112 coordinates Zn(2+). Glu-144 is a catalytic residue. Residues Glu-145, Glu-169, and His-355 each coordinate Zn(2+).

Belongs to the peptidase M20A family. ArgE subfamily. In terms of assembly, homodimer. It depends on Zn(2+) as a cofactor. Co(2+) serves as cofactor. The cofactor is glutathione.

It localises to the cytoplasm. It carries out the reaction N(2)-acetyl-L-ornithine + H2O = L-ornithine + acetate. The protein operates within amino-acid biosynthesis; L-arginine biosynthesis; L-ornithine from N(2)-acetyl-L-ornithine (linear): step 1/1. Its function is as follows. Catalyzes the hydrolysis of the amide bond of N(2)-acetylated L-amino acids. Cleaves the acetyl group from N-acetyl-L-ornithine to form L-ornithine, an intermediate in L-arginine biosynthesis pathway, and a branchpoint in the synthesis of polyamines. This is Acetylornithine deacetylase from Shigella dysenteriae serotype 1 (strain Sd197).